Reading from the N-terminus, the 438-residue chain is Aspartyl protease 25 (438 aa).

The first 23 residues, 1-23 (MAATTTIPLLLLLLAATVAAAAA), serve as a signal peptide directing secretion. Positions 79 to 433 (YVVRAGLGSP…DVANSRVGFA (355 aa)) constitute a Peptidase A1 domain. Asp97 is an active-site residue. Cys107 and Cys113 form a disulfide bridge. 3 N-linked (GlcNAc...) asparagine glycosylation sites follow: Asn123, Asn193, and Asn282. Asp313 is an active-site residue. The cysteines at positions 352 and 394 are disulfide-linked.

This sequence belongs to the peptidase A1 family.

Its function is as follows. Anther-specific aspartic protease involved in tapetal programmed cell death (PCD). Directly regulated by the transcription factor EAT1/DTD in anthers during tapetum PCD and degeneration. The polypeptide is Aspartyl protease 25 (Oryza sativa subsp. japonica (Rice)).